Consider the following 356-residue polypeptide: Replication factor C subunit 3 (356 aa).

Residue Lys20 is modified to N6-acetyllysine. Residue Ser125 is modified to Phosphoserine.

It belongs to the activator 1 small subunits family. In terms of assembly, subunit of the RFC complex, an heteropentameric complex consisting of a large subunit RFC1 and four small subunits RFC2, RFC3, RFC4 and RFC5; the RFC complex interacts with PCNA. Forms an heterotetrameric complex with RFC2, RFC4 and RFC5; this complex has ATPase activity but is not stimulated by PCNA. The heterotetramer of subunits RFC2, RFC3, RFC4 and RFC5 interacts with RAD17. Interacts with CNTD1; this interaction facilitates crossover formation.

It localises to the nucleus. Functionally, subunit of the replication factor C (RFC) complex which acts during elongation of primed DNA templates by DNA polymerases delta and epsilon, and is necessary for ATP-dependent loading of proliferating cell nuclear antigen (PCNA) onto primed DNA. The sequence is that of Replication factor C subunit 3 (Rfc3) from Mus musculus (Mouse).